Reading from the N-terminus, the 84-residue chain is Alpha-like toxin BmK M1 (84 aa).

The first 19 residues, 1 to 19 (MNYLVMISFALLLMTGVES), serve as a signal peptide directing secretion. One can recognise an LCN-type CS-alpha/beta domain in the interval 21-83 (RDAYIAKPHN…VPIRVPGKCH (63 aa)). 4 disulfide bridges follow: C31-C82, C35-C55, C41-C65, and C45-C67. R84 is a propeptide (removed by a carboxypeptidase).

It belongs to the long (4 C-C) scorpion toxin superfamily. Sodium channel inhibitor family. Alpha subfamily. As to expression, expressed by the venom gland.

The protein localises to the secreted. Functionally, alpha toxins bind voltage-independently at site-3 of sodium channels (Nav) and inhibit the inactivation of the activated channels thereby blocking neuronal transmission. This toxin is active against both mammals and insects, and is classified as an alpha-like toxin. It is active on Nav1.2/SCN2A (EC(50)=139-252 nM), Nav1.3/SCN3A (EC(50)=565 nM), Nav1.4/SCN4A and Nav1.5/SCN5A (EC(50)=195-500 nM), Nav1.6/SCN8A (EC(50)=214 nM), and drosophila DmNav1 (EC(50)=30 nM). In mNav1.6/SCN8A, the toxin induces a large increase in both transient and persistent currents, which correlates with a prominent reduction in the fast component of inactivating current. In rNav1.2/SCN2A and rNav1.3/SCN3A, toxin-increased currents is much smaller. Moreover, the toxin only accelerates the slow inactivation development and delay recovery of mNav1.6/SCN8A through binding to the channel in the open state. Is 6-fold more toxic than BmK-M2. In vivo, intrahippocampal injection into rat induces epileptiform responses. In addition, intraplantar injection into rat induces spontaneous nociception and hyperalgesia. This Olivierus martensii (Manchurian scorpion) protein is Alpha-like toxin BmK M1.